A 591-amino-acid chain; its full sequence is L-fucose isomerase (591 aa).

Active-site proton acceptor residues include E337 and D361. Mn(2+)-binding residues include E337, D361, and H528.

It belongs to the L-fucose isomerase family. Homohexamer. Mn(2+) is required as a cofactor.

The protein resides in the cytoplasm. It carries out the reaction L-fucose = L-fuculose. It functions in the pathway carbohydrate degradation; L-fucose degradation; L-lactaldehyde and glycerone phosphate from L-fucose: step 1/3. Its function is as follows. Converts the aldose L-fucose into the corresponding ketose L-fuculose. In Klebsiella pneumoniae (strain 342), this protein is L-fucose isomerase.